The primary structure comprises 415 residues: MAWASSFDAFFKNFKRESKIISEYDITLIMTYIEENKLQKAVSVIEKVLRDIESAPLHIAVTGETGAGKSTFINTLRGVGHEEKGAAPTGAIETTMKRTPYPHPKLPNVTIWDLPGIGTTNFTPQNYLTEMKFGEYDFFIIISATRFKENDAQLAKAIAQMGMNFYFVRTKIDSDLDNEQKFKPKSFNKEEVLKNIKDYCSNHLQESLDSEPPVFLVSNVDISKYDFPKLETKLLQDLPAHKRHVFSLSLQSLTEATINYKRDSLKQKVFLEAMKAGALATIPLGGMISDILENLDETFNLYRSYFGLDDASLENIAQDLNMSVDDFKVHLRFPHLFAEHNDESLEDKLFKYIKHISSVTGGPVAAVTYYRMAYYLQNLFLDTAANDAIALLNSKALFEKKVGPYISEPPEYWEA.

The IRG-type G domain occupies A55–D237. Residues G66, G68, K69, and S70 each contribute to the GDP site. At T89 the chain carries (Microbial infection) Phosphothreonine; by ROP17. Positions 90, 171, 173, and 219 each coordinate GDP.

This sequence belongs to the TRAFAC class dynamin-like GTPase superfamily. IRG family. Monomer, homodimer or homotetramer in the presence of GTP. Forms higher order homooligomers in GTP-dependent manner. As to quaternary structure, (Microbial infection) Interacts with Toxoplasma gondii ROP18. Post-translationally, (Microbial infection) Phosphorylated by Toxoplasma gondii ROP17; the phosphorylation leads to disassembly of IRGB6 (TGTP1/TGTP2) polymers into monomers and dimers. Phosphorylated by Toxoplasma gondii ROP18. As to expression, expressed in thymus and lymph nodes, predominantly T-cells. Not expressed by immature CD4(+) CD8(+) thymocytes (at protein level). Expressed in IFNG-stimulated macrophages. Expressed at low levels in unstimulated astrocytes. Due to sequence similarity with Tgtp2, it is impossible to assign unambiguously experimental data published in the literature to Tgtp1 or Tgtp2 gene.

It localises to the cytoplasm. The protein localises to the endoplasmic reticulum. It is found in the golgi apparatus. Its subcellular location is the parasitophorous vacuole membrane. It catalyses the reaction GTP + H2O = GDP + phosphate + H(+). Involved in innate cell-autonomous resistance to intracellular pathogens, such as Toxoplasma gondii. During avirulent type II T.gondii infection, recruited to the parasitophorous vacuole (PV) membrane, leading to PV vesiculation and rupture, and subsequent digestion of the parasite within the cytosol. Not recruited to virulent type I T.gondii PV membrane. May confer an antiviral state for vesicular stomatitis virus. In Mus musculus (Mouse), this protein is T-cell-specific guanine nucleotide triphosphate-binding protein 1 (Tgtp1).